The primary structure comprises 404 residues: Tryptophan synthase beta chain (404 aa).

Lys94 bears the N6-(pyridoxal phosphate)lysine mark.

The protein belongs to the TrpB family. In terms of assembly, tetramer of two alpha and two beta chains. Pyridoxal 5'-phosphate is required as a cofactor.

The catalysed reaction is (1S,2R)-1-C-(indol-3-yl)glycerol 3-phosphate + L-serine = D-glyceraldehyde 3-phosphate + L-tryptophan + H2O. The protein operates within amino-acid biosynthesis; L-tryptophan biosynthesis; L-tryptophan from chorismate: step 5/5. In terms of biological role, the beta subunit is responsible for the synthesis of L-tryptophan from indole and L-serine. The chain is Tryptophan synthase beta chain from Staphylococcus aureus (strain bovine RF122 / ET3-1).